A 152-amino-acid chain; its full sequence is Type-1 angiotensin II receptor-associated protein (152 aa).

Residues 1 to 23 (MELPAVNLKVILLGHWLLTTWGC) are Extracellular-facing. The chain crosses the membrane as a helical span at residues 24-44 (IVFSGSYAWANFTILALGVWA). Over 45–55 (VAQRDSIDAIS) the chain is Cytoplasmic. A helical membrane pass occupies residues 56 to 76 (MFLGGLLATIFLDIVHISIFY). At 77-86 (PRAGLTDTGR) the chain is on the extracellular side. Residues 87 to 107 (FGAGMAILSLLLKPLSCCFVY) form a helical membrane-spanning segment. Topologically, residues 108–152 (HMYRQRGGFLGSSQDRSAYQTIDSAEAPANAFAVPEGRGQDARGY) are cytoplasmic. 2 positions are modified to phosphoserine: serine 119 and serine 120. Position 128 is a phosphothreonine (threonine 128). Phosphoserine is present on serine 131.

In terms of assembly, interacts with RACK1, and with the carboxy-terminal region of AGTR1.

It is found in the endoplasmic reticulum membrane. The protein localises to the golgi apparatus membrane. It localises to the cytoplasmic vesicle membrane. In terms of biological role, appears to be a negative regulator of type-1 angiotensin II receptor-mediated signaling by regulating receptor internalization as well as mechanism of receptor desensitization such as phosphorylation. Also induces a decrease in cell proliferation and angiotensin II-stimulated transcriptional activity. The sequence is that of Type-1 angiotensin II receptor-associated protein (AGTRAP) from Pongo abelii (Sumatran orangutan).